The following is a 172-amino-acid chain: C-phycocyanin beta chain (172 aa).

Asn-72 bears the N4-methylasparagine mark. Positions 82 and 153 each coordinate (2R,3E)-phycocyanobilin.

It belongs to the phycobiliprotein family. Heterodimer of an alpha and a beta subunit, which further assembles into trimers and the trimers into hexamers. The basic functional unit of phycobiliproteins is a ring-shaped hexamer formed from two back-to-back trimers contacting via the alpha chain subunits. The trimers are composed of alpha/beta subunit heterodimers arranged around a three-fold axis of symmetry. The phycoerythrins also contain a gamma subunit which is located in the center of the hexamer. Post-translationally, contains two covalently linked phycocyanobilin chromophores.

The protein resides in the plastid. It is found in the cyanelle thylakoid membrane. Light-harvesting photosynthetic bile pigment-protein from the phycobiliprotein complex (phycobilisome, PBS). Phycocyanin is the major phycobiliprotein in the PBS rod. This Cyanophora paradoxa protein is C-phycocyanin beta chain (cpcB).